The sequence spans 701 residues: Elongation factor G (701 aa).

In terms of domain architecture, tr-type G spans 8 to 290 (ERYRNIGISA…AVVDYLPAPT (283 aa)). GTP contacts are provided by residues 17 to 24 (AHIDAGKT), 88 to 92 (DTPGH), and 142 to 145 (NKMD).

It belongs to the TRAFAC class translation factor GTPase superfamily. Classic translation factor GTPase family. EF-G/EF-2 subfamily.

The protein localises to the cytoplasm. Its function is as follows. Catalyzes the GTP-dependent ribosomal translocation step during translation elongation. During this step, the ribosome changes from the pre-translocational (PRE) to the post-translocational (POST) state as the newly formed A-site-bound peptidyl-tRNA and P-site-bound deacylated tRNA move to the P and E sites, respectively. Catalyzes the coordinated movement of the two tRNA molecules, the mRNA and conformational changes in the ribosome. The sequence is that of Elongation factor G from Aeromonas salmonicida (strain A449).